The following is a 99-amino-acid chain: Acylphosphatase-2 (99 aa).

Serine 2 carries the post-translational modification N-acetylserine. The Acylphosphatase-like domain maps to 9–99; it reads SVDYEVFGRV…LEYSNFSIRY (91 aa). Residues arginine 24 and asparagine 42 contribute to the active site. Serine 93 is subject to Phosphoserine.

This sequence belongs to the acylphosphatase family.

It catalyses the reaction an acyl phosphate + H2O = a carboxylate + phosphate + H(+). Its physiological role is not yet clear. The sequence is that of Acylphosphatase-2 (ACYP2) from Cavia porcellus (Guinea pig).